The chain runs to 921 residues: Isoleucine--tRNA ligase (921 aa).

Positions 57–67 match the 'HIGH' region motif; the sequence is PYANGDIHMGH. Residue glutamate 552 participates in L-isoleucyl-5'-AMP binding. Residues 593–597 carry the 'KMSKS' region motif; it reads KMSKS. Residue lysine 596 coordinates ATP. Residues cysteine 888, cysteine 891, cysteine 908, and cysteine 911 each coordinate Zn(2+).

It belongs to the class-I aminoacyl-tRNA synthetase family. IleS type 1 subfamily. Monomer. Requires Zn(2+) as cofactor.

The protein resides in the cytoplasm. It carries out the reaction tRNA(Ile) + L-isoleucine + ATP = L-isoleucyl-tRNA(Ile) + AMP + diphosphate. Catalyzes the attachment of isoleucine to tRNA(Ile). As IleRS can inadvertently accommodate and process structurally similar amino acids such as valine, to avoid such errors it has two additional distinct tRNA(Ile)-dependent editing activities. One activity is designated as 'pretransfer' editing and involves the hydrolysis of activated Val-AMP. The other activity is designated 'posttransfer' editing and involves deacylation of mischarged Val-tRNA(Ile). The sequence is that of Isoleucine--tRNA ligase from Bacillus cytotoxicus (strain DSM 22905 / CIP 110041 / 391-98 / NVH 391-98).